The chain runs to 255 residues: Small ribosomal subunit protein uS2 (255 aa).

The interval 230–255 (QSSSGRDLGASSEVPVEPALEEAAEG) is disordered.

Belongs to the universal ribosomal protein uS2 family.

This is Small ribosomal subunit protein uS2 from Rhizobium leguminosarum bv. trifolii (strain WSM2304).